The sequence spans 494 residues: Aldehyde dehydrogenase (494 aa).

Residue 223 to 228 participates in NAD(+) binding; the sequence is GSTTAG. Residues Glu-245 and Cys-279 contribute to the active site.

It belongs to the aldehyde dehydrogenase family.

It carries out the reaction an aldehyde + NAD(+) + H2O = a carboxylate + NADH + 2 H(+). The protein operates within mycotoxin biosynthesis. Aldehyde dehydrogenase; part of the gene cluster that mediates the biosynthesis of the selective antifungal agent ascochitine, an o-quinone methide that plays a possible protective role against other microbial competitors in nature and is considered to be important for pathogenicity of legume-associated Didymella species. The pathway probably begins with the synthesis of a keto-aldehyde intermediate by the ascochitine non-reducing polyketide synthase pksAC from successive condensations of 4 malonyl-CoA units, presumably with a simple acetyl-CoA starter unit. Release of the keto-aldehyde intermediate is consistent with the presence of the C-terminal reductive release domain. The HR-PKS (orf7) probably makes a diketide starter unit which is passed to the non-reducing polyketide synthase pksAC for further extension, producing ascochital and ascochitine. The aldehyde dehydrogenase (orf1), the 2-oxoglutarate-dependent dioxygenase (orf3) and the dehydrogenase (orf9) are probably involved in subsequent oxidations of methyl groups to the carboxylic acid of the heterocyclic ring. The ascochitine gene cluster also includes a gene encoding a short peptide with a cupin domain (orf2) that is often found in secondary metabolite gene clusters and which function has still to be determined. In Didymella fabae (Leaf and pod spot disease fungus), this protein is Aldehyde dehydrogenase.